The primary structure comprises 181 residues: LEM domain-containing protein 1 (181 aa).

Residues 1-45 (MVDVKCLSDCKLQNQLEKLGFSPGPILPSTRKLYEKKLVQLLVSP) form the LEM domain. The chain crosses the membrane as a helical; Signal-anchor for type II membrane protein span at residues 152–172 (FPVGLKLAVLGIFIIVVFVYL).

In terms of tissue distribution, testis-specific. Isoform 6 is detected in 17 of 18 colon cancer tissues examined.

The protein resides in the membrane. This is LEM domain-containing protein 1 (LEMD1) from Homo sapiens (Human).